The following is a 582-amino-acid chain: Phosphoglucomutase, cytoplasmic (582 aa).

2 residues coordinate alpha-D-glucose 1,6-bisphosphate: Arg25 and Ser124. The active-site Phosphoserine intermediate is Ser124. Residues Ser124, Asp300, Asp302, and Asp304 each coordinate Mg(2+). Position 124 is a phosphoserine (Ser124). The alpha-D-glucose 1,6-bisphosphate site is built by Asp304, Arg305, Thr368, Glu387, Ser389, and Lys400.

This sequence belongs to the phosphohexose mutase family. Monomer. Mg(2+) serves as cofactor.

It is found in the cytoplasm. It catalyses the reaction alpha-D-glucose 1-phosphate = alpha-D-glucose 6-phosphate. The enzyme catalyses O-phospho-L-seryl-[protein] + alpha-D-glucose 1-phosphate = alpha-D-glucose 1,6-bisphosphate + L-seryl-[protein]. The catalysed reaction is alpha-D-glucose 1,6-bisphosphate + L-seryl-[protein] = O-phospho-L-seryl-[protein] + alpha-D-glucose 6-phosphate. In terms of biological role, catalyzes the reversible isomerization of alpha-D-glucose 1-phosphate to alpha-D-glucose 6-phosphate. The mechanism proceeds via the intermediate compound alpha-D-glucose 1,6-bisphosphate. This enzyme participates in both the breakdown and synthesis of glucose. This chain is Phosphoglucomutase, cytoplasmic (PGM1), found in Pisum sativum (Garden pea).